The following is a 242-amino-acid chain: C-reactive protein 1.1 (242 aa).

The N-terminal stretch at methionine 1 to alanine 24 is a signal peptide. A Pentraxin (PTX) domain is found at isoleucine 30–cysteine 241. Residues threonine 60 and tyrosine 63 each coordinate phosphocholine. Intrachain disulfides connect cysteine 62–cysteine 125 and cysteine 112–cysteine 144. Ca(2+) is bound by residues aspartate 85 and asparagine 86. Residue asparagine 147 is glycosylated (N-linked (GlcNAc...) asparagine). Ca(2+) contacts are provided by glutamine 169, aspartate 170, and glutamine 180. Cysteines 207 and 241 form a disulfide.

It belongs to the pentraxin family. As to quaternary structure, homopentamer. Pentraxin (or pentaxin) have a discoid arrangement of 5 non-covalently bound subunits. Ca(2+) serves as cofactor.

The protein resides in the secreted. Its function is as follows. Might serve the role of immunoglobulins. This is C-reactive protein 1.1 from Limulus polyphemus (Atlantic horseshoe crab).